The chain runs to 130 residues: Protein NrdI (130 aa).

It belongs to the NrdI family.

Probably involved in ribonucleotide reductase function. The polypeptide is Protein NrdI (Bartonella bacilliformis (strain ATCC 35685 / KC583 / Herrer 020/F12,63)).